Here is a 57-residue protein sequence, read N- to C-terminus: DNA gyrase inhibitor YacG (57 aa).

4 residues coordinate Zn(2+): cysteine 10, cysteine 13, cysteine 25, and cysteine 29.

The protein belongs to the DNA gyrase inhibitor YacG family. In terms of assembly, interacts with GyrB. Zn(2+) serves as cofactor.

Its function is as follows. Inhibits all the catalytic activities of DNA gyrase by preventing its interaction with DNA. Acts by binding directly to the C-terminal domain of GyrB, which probably disrupts DNA binding by the gyrase. The chain is DNA gyrase inhibitor YacG from Brucella abortus (strain 2308).